Reading from the N-terminus, the 435-residue chain is 3-phosphoshikimate 1-carboxyvinyltransferase (435 aa).

3-phosphoshikimate-binding residues include Lys28, Ser29, and Arg33. Phosphoenolpyruvate is bound at residue Lys28. The phosphoenolpyruvate site is built by Gly100 and Arg128. 4 residues coordinate 3-phosphoshikimate: Ser173, Gln175, Asp321, and Lys348. Gln175 lines the phosphoenolpyruvate pocket. The active-site Proton acceptor is Asp321. Residues Arg352 and Arg394 each coordinate phosphoenolpyruvate.

The protein belongs to the EPSP synthase family. In terms of assembly, monomer.

It localises to the cytoplasm. It catalyses the reaction 3-phosphoshikimate + phosphoenolpyruvate = 5-O-(1-carboxyvinyl)-3-phosphoshikimate + phosphate. Its pathway is metabolic intermediate biosynthesis; chorismate biosynthesis; chorismate from D-erythrose 4-phosphate and phosphoenolpyruvate: step 6/7. In terms of biological role, catalyzes the transfer of the enolpyruvyl moiety of phosphoenolpyruvate (PEP) to the 5-hydroxyl of shikimate-3-phosphate (S3P) to produce enolpyruvyl shikimate-3-phosphate and inorganic phosphate. The polypeptide is 3-phosphoshikimate 1-carboxyvinyltransferase (Desulfitobacterium hafniense (strain DSM 10664 / DCB-2)).